A 315-amino-acid chain; its full sequence is 4-hydroxy-3-methylbut-2-enyl diphosphate reductase (315 aa).

Cys-18 provides a ligand contact to [4Fe-4S] cluster. 2 residues coordinate (2E)-4-hydroxy-3-methylbut-2-enyl diphosphate: His-47 and His-80. Dimethylallyl diphosphate is bound by residues His-47 and His-80. 2 residues coordinate isopentenyl diphosphate: His-47 and His-80. Cys-102 serves as a coordination point for [4Fe-4S] cluster. Residue His-130 participates in (2E)-4-hydroxy-3-methylbut-2-enyl diphosphate binding. Dimethylallyl diphosphate is bound at residue His-130. Residue His-130 coordinates isopentenyl diphosphate. Catalysis depends on Glu-132, which acts as the Proton donor. Thr-171 contacts (2E)-4-hydroxy-3-methylbut-2-enyl diphosphate. Cys-201 is a [4Fe-4S] cluster binding site. Residues Ser-229, Ser-230, Asn-231, and Ser-274 each contribute to the (2E)-4-hydroxy-3-methylbut-2-enyl diphosphate site. Residues Ser-229, Ser-230, Asn-231, and Ser-274 each coordinate dimethylallyl diphosphate. Residues Ser-229, Ser-230, Asn-231, and Ser-274 each coordinate isopentenyl diphosphate.

It belongs to the IspH family. The cofactor is [4Fe-4S] cluster.

It catalyses the reaction isopentenyl diphosphate + 2 oxidized [2Fe-2S]-[ferredoxin] + H2O = (2E)-4-hydroxy-3-methylbut-2-enyl diphosphate + 2 reduced [2Fe-2S]-[ferredoxin] + 2 H(+). The catalysed reaction is dimethylallyl diphosphate + 2 oxidized [2Fe-2S]-[ferredoxin] + H2O = (2E)-4-hydroxy-3-methylbut-2-enyl diphosphate + 2 reduced [2Fe-2S]-[ferredoxin] + 2 H(+). The protein operates within isoprenoid biosynthesis; dimethylallyl diphosphate biosynthesis; dimethylallyl diphosphate from (2E)-4-hydroxy-3-methylbutenyl diphosphate: step 1/1. It participates in isoprenoid biosynthesis; isopentenyl diphosphate biosynthesis via DXP pathway; isopentenyl diphosphate from 1-deoxy-D-xylulose 5-phosphate: step 6/6. In terms of biological role, catalyzes the conversion of 1-hydroxy-2-methyl-2-(E)-butenyl 4-diphosphate (HMBPP) into a mixture of isopentenyl diphosphate (IPP) and dimethylallyl diphosphate (DMAPP). Acts in the terminal step of the DOXP/MEP pathway for isoprenoid precursor biosynthesis. The sequence is that of 4-hydroxy-3-methylbut-2-enyl diphosphate reductase from Hyphomonas neptunium (strain ATCC 15444).